Reading from the N-terminus, the 143-residue chain is Meiotically up-regulated gene 128 protein (143 aa).

In terms of biological role, has a role in meiosis. The chain is Meiotically up-regulated gene 128 protein (mug128) from Schizosaccharomyces pombe (strain 972 / ATCC 24843) (Fission yeast).